A 294-amino-acid chain; its full sequence is 4-hydroxy-tetrahydrodipicolinate synthase (294 aa).

Residue Thr44 participates in pyruvate binding. The active-site Proton donor/acceptor is Tyr132. Catalysis depends on Lys160, which acts as the Schiff-base intermediate with substrate. Val202 is a pyruvate binding site.

This sequence belongs to the DapA family. In terms of assembly, homotetramer; dimer of dimers.

The protein resides in the cytoplasm. It catalyses the reaction L-aspartate 4-semialdehyde + pyruvate = (2S,4S)-4-hydroxy-2,3,4,5-tetrahydrodipicolinate + H2O + H(+). Its pathway is amino-acid biosynthesis; L-lysine biosynthesis via DAP pathway; (S)-tetrahydrodipicolinate from L-aspartate: step 3/4. Catalyzes the condensation of (S)-aspartate-beta-semialdehyde [(S)-ASA] and pyruvate to 4-hydroxy-tetrahydrodipicolinate (HTPA). This chain is 4-hydroxy-tetrahydrodipicolinate synthase, found in Leptospira borgpetersenii serovar Hardjo-bovis (strain JB197).